Reading from the N-terminus, the 253-residue chain is Hydroxyacylglutathione hydrolase (253 aa).

Residues histidine 59, histidine 61, aspartate 63, histidine 64, histidine 118, aspartate 143, and histidine 181 each contribute to the Zn(2+) site.

It belongs to the metallo-beta-lactamase superfamily. Glyoxalase II family. As to quaternary structure, monomer. It depends on Zn(2+) as a cofactor.

The catalysed reaction is an S-(2-hydroxyacyl)glutathione + H2O = a 2-hydroxy carboxylate + glutathione + H(+). The protein operates within secondary metabolite metabolism; methylglyoxal degradation; (R)-lactate from methylglyoxal: step 2/2. Functionally, thiolesterase that catalyzes the hydrolysis of S-D-lactoyl-glutathione to form glutathione and D-lactic acid. The protein is Hydroxyacylglutathione hydrolase of Prochlorococcus marinus (strain MIT 9211).